Consider the following 108-residue polypeptide: Replication initiation control protein YabA (108 aa).

4 residues coordinate Zn(2+): His82, Cys84, Cys98, and Cys101.

Belongs to the YabA family. In terms of assembly, homotetramer. Interacts with both DnaA and DnaN, acting as a bridge between these two proteins. The cofactor is Zn(2+).

It is found in the cytoplasm. Its subcellular location is the nucleoid. Functionally, involved in control of chromosome replication initiation. Inhibits the cooperative binding of DnaA to the oriC region, thus negatively regulating initiation of chromosome replication. Inhibits the ability of DnaA-ATP to form a helix on DNA; does not disassemble preformed DnaA-DNA helices. Decreases the residence time of DnaA on the chromosome at its binding sites (oriC, replication forks and promoter-binding sites). Tethers DnaA to the replication machinery via the DNA polymerase beta sliding clamp subunit (dnaN). Associates with oriC and other DnaA targets on the chromosome in a DnaA-dependent manner. The protein is Replication initiation control protein YabA of Streptococcus agalactiae serotype Ia (strain ATCC 27591 / A909 / CDC SS700).